Reading from the N-terminus, the 191-residue chain is Large ribosomal subunit protein uL5 (191 aa).

It belongs to the universal ribosomal protein uL5 family. Part of the 50S ribosomal subunit; part of the 5S rRNA/L5/L18/L25 subcomplex. Contacts the 5S rRNA and the P site tRNA. Forms a bridge to the 30S subunit in the 70S ribosome.

Functionally, this is one of the proteins that bind and probably mediate the attachment of the 5S RNA into the large ribosomal subunit, where it forms part of the central protuberance. In the 70S ribosome it contacts protein S13 of the 30S subunit (bridge B1b), connecting the 2 subunits; this bridge is implicated in subunit movement. Contacts the P site tRNA; the 5S rRNA and some of its associated proteins might help stabilize positioning of ribosome-bound tRNAs. The polypeptide is Large ribosomal subunit protein uL5 (Thermobifida fusca (strain YX)).